The sequence spans 499 residues: Maturase K (499 aa).

The protein belongs to the intron maturase 2 family. MatK subfamily.

It is found in the plastid. It localises to the chloroplast. In terms of biological role, usually encoded in the trnK tRNA gene intron. Probably assists in splicing its own and other chloroplast group II introns. In Ceratozamia mexicana (Mexican horncone), this protein is Maturase K.